The primary structure comprises 256 residues: Thiazole synthase (256 aa).

Lysine 95 serves as the catalytic Schiff-base intermediate with DXP. 1-deoxy-D-xylulose 5-phosphate is bound by residues glycine 156, 182 to 183 (AG), and 204 to 205 (NT).

This sequence belongs to the ThiG family. Homotetramer. Forms heterodimers with either ThiH or ThiS.

The protein resides in the cytoplasm. The catalysed reaction is [ThiS sulfur-carrier protein]-C-terminal-Gly-aminoethanethioate + 2-iminoacetate + 1-deoxy-D-xylulose 5-phosphate = [ThiS sulfur-carrier protein]-C-terminal Gly-Gly + 2-[(2R,5Z)-2-carboxy-4-methylthiazol-5(2H)-ylidene]ethyl phosphate + 2 H2O + H(+). It participates in cofactor biosynthesis; thiamine diphosphate biosynthesis. Its function is as follows. Catalyzes the rearrangement of 1-deoxy-D-xylulose 5-phosphate (DXP) to produce the thiazole phosphate moiety of thiamine. Sulfur is provided by the thiocarboxylate moiety of the carrier protein ThiS. In vitro, sulfur can be provided by H(2)S. This chain is Thiazole synthase, found in Salmonella paratyphi A (strain ATCC 9150 / SARB42).